The following is a 302-amino-acid chain: UDP-N-acetylenolpyruvoylglucosamine reductase (302 aa).

Residues 31–196 form the FAD-binding PCMH-type domain; that stretch reads KIGGPADVLA…LRAWISLERG (166 aa). The active site involves R175. Catalysis depends on S225, which acts as the Proton donor. The active site involves E295.

This sequence belongs to the MurB family. The cofactor is FAD.

It is found in the cytoplasm. The catalysed reaction is UDP-N-acetyl-alpha-D-muramate + NADP(+) = UDP-N-acetyl-3-O-(1-carboxyvinyl)-alpha-D-glucosamine + NADPH + H(+). It participates in cell wall biogenesis; peptidoglycan biosynthesis. Its function is as follows. Cell wall formation. The chain is UDP-N-acetylenolpyruvoylglucosamine reductase from Caldanaerobacter subterraneus subsp. tengcongensis (strain DSM 15242 / JCM 11007 / NBRC 100824 / MB4) (Thermoanaerobacter tengcongensis).